We begin with the raw amino-acid sequence, 606 residues long: ATP-dependent rRNA helicase SPB4 (606 aa).

Positions 7–35 (WDNLGFSLLPWIRTGLDVMGFETMTPVQA) match the Q motif motif. The region spanning 38-224 (IPMLAGNKDV…KTGLRNPVRI (187 aa)) is the Helicase ATP-binding domain. 51-58 (SVTGSGKT) contributes to the ATP binding site. Residues 172–175 (DEAD) carry the DEAD box motif. Positions 248 to 404 (KLQLLVSILN…ELDLEVKGIT (157 aa)) constitute a Helicase C-terminal domain. A Phosphoserine modification is found at Ser254. Positions 539-582 (KTLTKERKLERKEKMSLKRKAIEEELKAEELDENAEEERIKEDW) form a coiled coil.

It belongs to the DEAD box helicase family. DDX55/SPB4 subfamily. Component of pre-60S ribosomal complexes.

Its subcellular location is the nucleus. It is found in the nucleolus. The catalysed reaction is ATP + H2O = ADP + phosphate + H(+). Functionally, ATP-binding RNA helicase involved in the biogenesis of 60S ribosomal subunits. Binds 90S pre-ribosomal particles and dissociates from pre-60S ribosomal particles after processing of 27SB pre-rRNA. Required for the normal formation of 18S rRNA through the processing of pre-rRNAs at sites A0, A1 and A2, and the normal formation of 25S and 5.8S rRNAs through the processing of pre-rRNAs at sites C1 and C2. Also required for recruitment of NOG2 to pre-ribosomes. In Saccharomyces cerevisiae (strain ATCC 204508 / S288c) (Baker's yeast), this protein is ATP-dependent rRNA helicase SPB4.